Reading from the N-terminus, the 139-residue chain is ATP synthase epsilon chain (139 aa).

This sequence belongs to the ATPase epsilon chain family. F-type ATPases have 2 components, CF(1) - the catalytic core - and CF(0) - the membrane proton channel. CF(1) has five subunits: alpha(3), beta(3), gamma(1), delta(1), epsilon(1). CF(0) has three main subunits: a, b and c.

Its subcellular location is the cell inner membrane. Produces ATP from ADP in the presence of a proton gradient across the membrane. The protein is ATP synthase epsilon chain of Acinetobacter baylyi (strain ATCC 33305 / BD413 / ADP1).